Reading from the N-terminus, the 309-residue chain is Porphobilinogen deaminase (309 aa).

Residue cysteine 242 is modified to S-(dipyrrolylmethanemethyl)cysteine.

The protein belongs to the HMBS family. As to quaternary structure, monomer. It depends on dipyrromethane as a cofactor.

It carries out the reaction 4 porphobilinogen + H2O = hydroxymethylbilane + 4 NH4(+). It participates in porphyrin-containing compound metabolism; protoporphyrin-IX biosynthesis; coproporphyrinogen-III from 5-aminolevulinate: step 2/4. Its function is as follows. Tetrapolymerization of the monopyrrole PBG into the hydroxymethylbilane pre-uroporphyrinogen in several discrete steps. This is Porphobilinogen deaminase from Legionella pneumophila (strain Paris).